We begin with the raw amino-acid sequence, 202 residues long: MNLEQIYKDCGAYLEGHFLLSSGKHSQFYLQSAKVLEDPKLAAKLCDELAKIIASYKIEFDSICSPALGGILAGYELARACSKRFIFTERVNKEMTLRRGFEVKKGEKFIICEDIITTGGSALESAKIIESLGGIVVGFAALANRGFCAVENLKSPRKDNAKLPENLPLFTLGNFEFEIYDETNCPLCKKGNKAIKPGSRGN.

Residues K93 and 113–121 (EDIITTGGS) each bind 5-phospho-alpha-D-ribose 1-diphosphate. T117 and R145 together coordinate orotate.

The protein belongs to the purine/pyrimidine phosphoribosyltransferase family. PyrE subfamily. In terms of assembly, homodimer. Requires Mg(2+) as cofactor.

The enzyme catalyses orotidine 5'-phosphate + diphosphate = orotate + 5-phospho-alpha-D-ribose 1-diphosphate. It participates in pyrimidine metabolism; UMP biosynthesis via de novo pathway; UMP from orotate: step 1/2. In terms of biological role, catalyzes the transfer of a ribosyl phosphate group from 5-phosphoribose 1-diphosphate to orotate, leading to the formation of orotidine monophosphate (OMP). The polypeptide is Orotate phosphoribosyltransferase (Campylobacter jejuni subsp. jejuni serotype O:2 (strain ATCC 700819 / NCTC 11168)).